A 382-amino-acid chain; its full sequence is C-type lectin domain-containing protein 38 (382 aa).

The Cytoplasmic portion of the chain corresponds to 1 to 40 (MAIFYDDPLERLNQPIKTKSYRKKQVVQRVHVFIFDNWKL). The helical transmembrane segment at 41-61 (ILLGILNLIFLIIAIVFAILF) threads the bilayer. The Extracellular portion of the chain corresponds to 62-382 (FVGSADCAQL…FFLCKRAIDF (321 aa)). Residues 97 to 116 (NAITTTQGTPSNKTSTTTPS) are disordered. Residues 100–116 (TTTQGTPSNKTSTTTPS) are compositionally biased toward low complexity. N-linked (GlcNAc...) asparagine glycosylation is found at asparagine 108 and asparagine 189. C-type lectin domains follow at residues 129–250 (VGTK…FVCE) and 264–377 (YNKN…FLCK). Cystine bridges form between cysteine 150/cysteine 249, cysteine 223/cysteine 241, cysteine 285/cysteine 376, and cysteine 348/cysteine 368.

Expressed in ventral cord motor neurons and PLM touch neurons.

It is found in the membrane. Involved in negative modulation of unc-40-mediated axon outgrowth. Required for proper presynaptic development in axons that have reached their targets. May function in concert with E3 ubiquitin-protein ligase rpm-1 in regulating axon outgrowth. The chain is C-type lectin domain-containing protein 38 from Caenorhabditis elegans.